The sequence spans 477 residues: tRNA-2-methylthio-N(6)-dimethylallyladenosine synthase (477 aa).

Positions 3–120 constitute an MTTase N-terminal domain; that stretch reads KKLYIKTWGC…LPEMINELKG (118 aa). Residues cysteine 12, cysteine 49, cysteine 83, cysteine 157, cysteine 161, and cysteine 164 each coordinate [4Fe-4S] cluster. Residues 143-375 enclose the Radical SAM core domain; it reads RAEGPTAFVS…QQRITQQALR (233 aa). Positions 378–441 constitute a TRAM domain; that stretch reads RHMVGTEQRI…TNSLRGEVVR (64 aa).

The protein belongs to the methylthiotransferase family. MiaB subfamily. In terms of assembly, monomer. It depends on [4Fe-4S] cluster as a cofactor.

The protein localises to the cytoplasm. It catalyses the reaction N(6)-dimethylallyladenosine(37) in tRNA + (sulfur carrier)-SH + AH2 + 2 S-adenosyl-L-methionine = 2-methylsulfanyl-N(6)-dimethylallyladenosine(37) in tRNA + (sulfur carrier)-H + 5'-deoxyadenosine + L-methionine + A + S-adenosyl-L-homocysteine + 2 H(+). Its function is as follows. Catalyzes the methylthiolation of N6-(dimethylallyl)adenosine (i(6)A), leading to the formation of 2-methylthio-N6-(dimethylallyl)adenosine (ms(2)i(6)A) at position 37 in tRNAs that read codons beginning with uridine. The protein is tRNA-2-methylthio-N(6)-dimethylallyladenosine synthase of Alteromonas mediterranea (strain DSM 17117 / CIP 110805 / LMG 28347 / Deep ecotype).